A 288-amino-acid chain; its full sequence is Long chain fatty acid elongase 1 (288 aa).

A run of 7 helical transmembrane segments spans residues 39–59, 73–93, 126–146, 150–170, 180–197, 217–237, and 247–267; these read FFAD…VVVF, LTIP…AGAV, WVWL…FLVL, PLMF…WYSH, GIYL…YYFL, IVQF…MHFT, and VFKL…NFFL.

This sequence belongs to the ELO family.

It is found in the membrane. The catalysed reaction is (6Z,9Z,12Z)-octadecatrienoyl-CoA + malonyl-CoA + H(+) = (8Z,11Z,14Z)-3-oxoeicosatrienoyl-CoA + CO2 + CoA. It carries out the reaction (6Z,9Z,12Z,15Z)-octadecatetraenoyl-CoA + malonyl-CoA + H(+) = (8Z,11Z,14Z,17Z)-3-oxoicosatetraenoyl-CoA + CO2 + CoA. The enzyme catalyses (9Z)-hexadecenoyl-CoA + malonyl-CoA + H(+) = 3-oxo-(11Z)-octadecenoyl-CoA + CO2 + CoA. It participates in lipid metabolism; fatty acid biosynthesis. In terms of biological role, catalyzes the first and rate-limiting reaction of the four reactions that constitute the long-chain fatty acids elongation cycle. Uses malonyl-CoA to add 2 carbons per cycle to the chain of long-chain fatty acids. Condensing enzyme that catalyzes the elongation of monounsaturated (MUFA) and polyunsaturated (PUFA) fatty acids that are involved in multiple biological processes as precursors of membrane lipids and lipid mediators. The chain is Long chain fatty acid elongase 1 from Caenorhabditis elegans.